Here is a 250-residue protein sequence, read N- to C-terminus: Triosephosphate isomerase (250 aa).

Asn-9–Lys-11 contributes to the substrate binding site. His-95 acts as the Electrophile in catalysis. Glu-167 acts as the Proton acceptor in catalysis. Residues Gly-173, Ser-213, and Gly-234–Gly-235 contribute to the substrate site.

It belongs to the triosephosphate isomerase family. Homodimer.

The protein resides in the cytoplasm. It carries out the reaction D-glyceraldehyde 3-phosphate = dihydroxyacetone phosphate. It participates in carbohydrate biosynthesis; gluconeogenesis. Its pathway is carbohydrate degradation; glycolysis; D-glyceraldehyde 3-phosphate from glycerone phosphate: step 1/1. Its function is as follows. Involved in the gluconeogenesis. Catalyzes stereospecifically the conversion of dihydroxyacetone phosphate (DHAP) to D-glyceraldehyde-3-phosphate (G3P). In Herpetosiphon aurantiacus (strain ATCC 23779 / DSM 785 / 114-95), this protein is Triosephosphate isomerase.